We begin with the raw amino-acid sequence, 825 residues long: NT-3 growth factor receptor (825 aa).

Positions 1–31 (MDVSLCPAKCSFWRIFLLGSVWLDYVGSVLA) are cleaved as a signal peptide. 2 disulfide bridges follow: C32–C38 and C36–C45. Over 32 to 429 (CPANCVCSKT…TVTHKPEEDT (398 aa)) the chain is Extracellular. Residues N68, N72, and N79 are each glycosylated (N-linked (GlcNAc...) asparagine). LRR repeat units follow at residues 104–125 (GLQKLTIKNSGLRSIQPRAFAK) and 128–149 (HLRYINLSSNRLTTLSWQLFQT). N133 and N163 each carry an N-linked (GlcNAc...) asparagine glycan. Residues 160 to 209 (NFFNCSCDIRWMQLWQEQGEARLNSQNLYCINADGSQLPLFRMNISQCDL) form the LRRCT domain. 2 cysteine pairs are disulfide-bonded: C164/C189 and C166/C207. N203, N218, N232, N259, N267, N272, and N294 each carry an N-linked (GlcNAc...) asparagine glycan. Ig-like C2-type domains lie at 210–300 (PEIS…VALT) and 309–382 (SLEE…IAKN). C231 and C284 are oxidised to a cystine. A disulfide bond links C320 and C362. 2 N-linked (GlcNAc...) asparagine glycosylation sites follow: N375 and N388. The chain crosses the membrane as a helical span at residues 430–453 (FGVSIAVGLAAFACVLLVVLFIMI). The Cytoplasmic segment spans residues 454–825 (NKYGRRSKFG…ATPIYLDILG (372 aa)). S493 is subject to Phosphoserine. Residue Y516 is modified to Phosphotyrosine; by autocatalysis. The Protein kinase domain occupies 538–825 (IVLKRELGEG…ATPIYLDILG (288 aa)). ATP-binding positions include 544–552 (LGEGAFGKV) and K572. The active-site Proton acceptor is D679. Y705, Y709, and Y710 each carry phosphotyrosine; by autocatalysis.

This sequence belongs to the protein kinase superfamily. Tyr protein kinase family. Insulin receptor subfamily. As to quaternary structure, exists in a dynamic equilibrium between monomeric (low affinity) and dimeric (high affinity) structures. Binds SH2B2. Interacts with SQSTM1 and KIDINS220. Interacts with PTPRS. Interacts with MAPK8IP3/JIP3. Post-translationally, ligand-mediated auto-phosphorylation.

Its subcellular location is the membrane. The catalysed reaction is L-tyrosyl-[protein] + ATP = O-phospho-L-tyrosyl-[protein] + ADP + H(+). In terms of biological role, receptor tyrosine kinase involved in nervous system and probably heart development. Upon binding of its ligand NTF3/neurotrophin-3, NTRK3 autophosphorylates and activates different signaling pathways, including the phosphatidylinositol 3-kinase/AKT and the MAPK pathways, that control cell survival and differentiation. The protein is NT-3 growth factor receptor (NTRK3) of Saimiri boliviensis boliviensis (Bolivian squirrel monkey).